The chain runs to 286 residues: Bifunctional protein FolD (286 aa).

Residues 165–167 (GRS), serine 190, and valine 231 contribute to the NADP(+) site.

The protein belongs to the tetrahydrofolate dehydrogenase/cyclohydrolase family. As to quaternary structure, homodimer.

The enzyme catalyses (6R)-5,10-methylene-5,6,7,8-tetrahydrofolate + NADP(+) = (6R)-5,10-methenyltetrahydrofolate + NADPH. It catalyses the reaction (6R)-5,10-methenyltetrahydrofolate + H2O = (6R)-10-formyltetrahydrofolate + H(+). Its pathway is one-carbon metabolism; tetrahydrofolate interconversion. Catalyzes the oxidation of 5,10-methylenetetrahydrofolate to 5,10-methenyltetrahydrofolate and then the hydrolysis of 5,10-methenyltetrahydrofolate to 10-formyltetrahydrofolate. This is Bifunctional protein FolD from Bacillus cytotoxicus (strain DSM 22905 / CIP 110041 / 391-98 / NVH 391-98).